We begin with the raw amino-acid sequence, 583 residues long: 2-succinyl-5-enolpyruvyl-6-hydroxy-3-cyclohexene-1-carboxylate synthase (583 aa).

The protein belongs to the TPP enzyme family. MenD subfamily. As to quaternary structure, homodimer. The cofactor is Mg(2+). Requires Mn(2+) as cofactor. Thiamine diphosphate is required as a cofactor.

The enzyme catalyses isochorismate + 2-oxoglutarate + H(+) = 5-enolpyruvoyl-6-hydroxy-2-succinyl-cyclohex-3-ene-1-carboxylate + CO2. The protein operates within quinol/quinone metabolism; 1,4-dihydroxy-2-naphthoate biosynthesis; 1,4-dihydroxy-2-naphthoate from chorismate: step 2/7. It participates in quinol/quinone metabolism; menaquinone biosynthesis. In terms of biological role, catalyzes the thiamine diphosphate-dependent decarboxylation of 2-oxoglutarate and the subsequent addition of the resulting succinic semialdehyde-thiamine pyrophosphate anion to isochorismate to yield 2-succinyl-5-enolpyruvyl-6-hydroxy-3-cyclohexene-1-carboxylate (SEPHCHC). The sequence is that of 2-succinyl-5-enolpyruvyl-6-hydroxy-3-cyclohexene-1-carboxylate synthase from Chlorobium chlorochromatii (strain CaD3).